The chain runs to 1529 residues: Ras guanine nucleotide exchange factor B (1529 aa).

A coiled-coil region spans residues 135–186; the sequence is ISNIEKQLSNLVNLKSNTTEQTDRKYKTNLIDFKESIIQLEKDCKNLLKQSN. Disordered regions lie at residues 290–357, 576–600, 680–724, 847–948, and 1168–1206; these read INTL…ISIN, TTTT…KSSH, KRNT…HIQQ, MGKE…NHNR, and QPPQ…STNL. Low complexity-rich tracts occupy residues 576–591, 683–724, and 853–887; these read TTTT…TTTN, TSSG…HIQQ, and NSNT…NNNE. Coiled coils occupy residues 722-798 and 871-898; these read IQQI…LNRK and NNNN…ETNK. The span at 888-898 shows a compositional bias: basic and acidic residues; it reads NKNENKNETNK. Low complexity-rich tracts occupy residues 906 to 916, 924 to 940, 1168 to 1187, and 1197 to 1206; these read SSTSTLSSSTT, SSTN…LLPP, QPPQ…TTQP, and QPQLQQSTNL. Positions 1075–1205 constitute an N-terminal Ras-GEF domain; sequence FYRSIKYASL…PQPQLQQSTN (131 aa). The 236-residue stretch at 1282 to 1517 folds into the Ras-GEF domain; sequence SSTDIAEQLT…YEQSILLEPK (236 aa).

It localises to the cytoplasm. Promotes the exchange of Ras-bound GDP by GTP. Involved in phagocytosis, fluid-phase endocytosis, regulation of macropinocytosis and control of cell movement. The polypeptide is Ras guanine nucleotide exchange factor B (gefB) (Dictyostelium discoideum (Social amoeba)).